The primary structure comprises 254 residues: Sulfoacetaldehyde reductase (254 aa).

Position 8–32 (8–32) interacts with NADP(+); the sequence is FITGATSGFGEAAAQVFADAGWSLV. Serine 141 lines the substrate pocket. Tyrosine 154 (proton acceptor) is an active-site residue.

The protein belongs to the short-chain dehydrogenases/reductases (SDR) family. Homodimer and heterotetramer.

The catalysed reaction is 2-hydroxyethane-1-sulfonate + NADP(+) = sulfoacetaldehyde + NADPH + H(+). It participates in organosulfur degradation. In terms of biological role, catalyzes the formation of isethionate from 2-sulfoacetaldehyde in the deaminative pathway of taurine. The enzyme is specific for NADPH; NADH is not a substrate. The protein is Sulfoacetaldehyde reductase (isfD) of Klebsiella oxytoca.